Reading from the N-terminus, the 162-residue chain is Allophycocyanin beta chain (162 aa).

An N4-methylasparagine modification is found at N72. (2R,3E)-phycocyanobilin is bound at residue C82.

Belongs to the phycobiliprotein family. As to quaternary structure, heterodimer of an alpha and a beta chain. In terms of processing, contains one covalently linked phycocyanobilin chromophore.

The protein resides in the cellular thylakoid membrane. In terms of biological role, light-harvesting photosynthetic bile pigment-protein from the phycobiliprotein complex. Allophycocyanin has a maximum absorption at approximately 650 nanometers. This Microchaete diplosiphon (Fremyella diplosiphon) protein is Allophycocyanin beta chain.